The chain runs to 310 residues: tRNA dimethylallyltransferase (310 aa).

13 to 20 serves as a coordination point for ATP; that stretch reads GPTASGKT. Substrate is bound at residue 15–20; sequence TASGKT. Interaction with substrate tRNA stretches follow at residues 38 to 41, 162 to 166, 243 to 248, and 276 to 283; these read DSAL, QRLSR, RCVGYR, and KRQITWLR.

Belongs to the IPP transferase family. As to quaternary structure, monomer. It depends on Mg(2+) as a cofactor.

It carries out the reaction adenosine(37) in tRNA + dimethylallyl diphosphate = N(6)-dimethylallyladenosine(37) in tRNA + diphosphate. In terms of biological role, catalyzes the transfer of a dimethylallyl group onto the adenine at position 37 in tRNAs that read codons beginning with uridine, leading to the formation of N6-(dimethylallyl)adenosine (i(6)A). This chain is tRNA dimethylallyltransferase, found in Aliivibrio fischeri (strain ATCC 700601 / ES114) (Vibrio fischeri).